Reading from the N-terminus, the 243-residue chain is Adenosylcobinamide-GDP ribazoletransferase (243 aa).

5 consecutive transmembrane segments (helical) span residues 31 to 51, 57 to 77, 109 to 129, 135 to 155, and 188 to 208; these read LLFY…LNIA, LLLH…ALHL, IAVV…LALI, MALI…FLTT, and LVIA…VFIW.

This sequence belongs to the CobS family. The cofactor is Mg(2+).

It is found in the cell inner membrane. The enzyme catalyses alpha-ribazole + adenosylcob(III)inamide-GDP = adenosylcob(III)alamin + GMP + H(+). It carries out the reaction alpha-ribazole 5'-phosphate + adenosylcob(III)inamide-GDP = adenosylcob(III)alamin 5'-phosphate + GMP + H(+). Its pathway is cofactor biosynthesis; adenosylcobalamin biosynthesis; adenosylcobalamin from cob(II)yrinate a,c-diamide: step 7/7. In terms of biological role, joins adenosylcobinamide-GDP and alpha-ribazole to generate adenosylcobalamin (Ado-cobalamin). Also synthesizes adenosylcobalamin 5'-phosphate from adenosylcobinamide-GDP and alpha-ribazole 5'-phosphate. The chain is Adenosylcobinamide-GDP ribazoletransferase from Pseudomonas fluorescens (strain Pf0-1).